Here is a 63-residue protein sequence, read N- to C-terminus: Large ribosomal subunit protein bL28 (63 aa).

This sequence belongs to the bacterial ribosomal protein bL28 family.

The protein is Large ribosomal subunit protein bL28 of Kosmotoga olearia (strain ATCC BAA-1733 / DSM 21960 / TBF 19.5.1).